Reading from the N-terminus, the 208-residue chain is Probable nicotinate-nucleotide adenylyltransferase (208 aa).

Belongs to the NadD family.

The catalysed reaction is nicotinate beta-D-ribonucleotide + ATP + H(+) = deamido-NAD(+) + diphosphate. The protein operates within cofactor biosynthesis; NAD(+) biosynthesis; deamido-NAD(+) from nicotinate D-ribonucleotide: step 1/1. Catalyzes the reversible adenylation of nicotinate mononucleotide (NaMN) to nicotinic acid adenine dinucleotide (NaAD). The polypeptide is Probable nicotinate-nucleotide adenylyltransferase (Kineococcus radiotolerans (strain ATCC BAA-149 / DSM 14245 / SRS30216)).